Reading from the N-terminus, the 130-residue chain is Cysteine methyltransferase (130 aa).

The enzyme catalyses [trehalose-6-phosphate synthase]-L-cysteine + S-adenosyl-L-methionine = [trehalose-6-phosphate synthase]-S-methyl-L-cysteine + S-adenosyl-L-homocysteine + H(+). S-adenosyl-L-methionine-dependent protein-cysteine S-methyltransferase with broad substrate specificity. Methylates trehalose-6-phosphate synthase (TPS), enhancing its enzymatic activity and promoting trehalose synthesis upon entry of cells into stationary phase. This chain is Cysteine methyltransferase, found in Saccharomyces cerevisiae (Baker's yeast).